The chain runs to 812 residues: Transcription-repair-coupling factor (812 aa).

Residues 280 to 441 form the Helicase ATP-binding domain; sequence DMSKPIPMDR…MTGIKDLSII (162 aa). Residue 293 to 300 participates in ATP binding; the sequence is GDVGFGKT. The short motif at 394-397 is the DEEH box element; it reads DEEH. The Helicase C-terminal domain maps to 462–621; it reads LIRKTILREI…NQDLEIRGVG (160 aa).

It in the N-terminal section; belongs to the UvrB family. The protein in the C-terminal section; belongs to the helicase family. RecG subfamily.

The protein resides in the cytoplasm. In terms of biological role, couples transcription and DNA repair by recognizing RNA polymerase (RNAP) stalled at DNA lesions. Mediates ATP-dependent release of RNAP and its truncated transcript from the DNA, and recruitment of nucleotide excision repair machinery to the damaged site. This chain is Transcription-repair-coupling factor (mfd), found in Buchnera aphidicola subsp. Acyrthosiphon pisum (strain APS) (Acyrthosiphon pisum symbiotic bacterium).